The primary structure comprises 102 residues: Omega-hexatoxin-Hi2a (102 aa).

The signal sequence occupies residues 1-23 (MKFSKLSLTLALILTQALLVVCG). Positions 24–56 (KINEDFMENGLESHALHDEIRKPIDTEKADAER) are excised as a propeptide. 3 disulfides stabilise this stretch: C61/C75, C68/C81, and C74/C86. Residue L98 is modified to Leucine amide. A propeptide spanning residues 100–102 (RAL) is cleaved from the precursor.

The protein belongs to the neurotoxin 15 family. 02 (omega-actx) subfamily. As to expression, expressed by the venom gland.

The protein localises to the secreted. Potent inhibitor of insect, but not mammalian, voltage-gated calcium channels (Cav). The protein is Omega-hexatoxin-Hi2a of Hadronyche infensa (Fraser island funnel-web spider).